The sequence spans 447 residues: NADP-specific glutamate dehydrogenase (447 aa).

Positions 92, 113, and 116 each coordinate substrate. Lys-128 (proton donor) is an active-site residue. Gly-167 contacts substrate. Thr-211 and Asn-242 together coordinate NADP(+). Substrate is bound at residue Ser-380.

The protein belongs to the Glu/Leu/Phe/Val dehydrogenases family. In terms of assembly, homohexamer.

It catalyses the reaction L-glutamate + NADP(+) + H2O = 2-oxoglutarate + NH4(+) + NADPH + H(+). Catalyzes the reversible oxidative deamination of glutamate to alpha-ketoglutarate and ammonia. This chain is NADP-specific glutamate dehydrogenase (gdhA), found in Salmonella typhi.